A 585-amino-acid chain; its full sequence is Glutamine--tRNA ligase (585 aa).

The 'HIGH' region motif lies at 51 to 61 (PEPNGYLHIGH). Residues 52-54 (EPN) and 58-64 (HIGHAKS) contribute to the ATP site. 2 residues coordinate L-glutamine: Asp84 and Tyr238. ATP is bound by residues Thr257 and 292-293 (RL). A 'KMSKS' region motif is present at residues 299 to 303 (ITSKR).

Belongs to the class-I aminoacyl-tRNA synthetase family. In terms of assembly, monomer.

The protein localises to the cytoplasm. It carries out the reaction tRNA(Gln) + L-glutamine + ATP = L-glutaminyl-tRNA(Gln) + AMP + diphosphate. In Cupriavidus taiwanensis (strain DSM 17343 / BCRC 17206 / CCUG 44338 / CIP 107171 / LMG 19424 / R1) (Ralstonia taiwanensis (strain LMG 19424)), this protein is Glutamine--tRNA ligase.